The sequence spans 359 residues: Glycerol-3-phosphate dehydrogenase [NAD(P)+] (359 aa).

NADPH contacts are provided by T11, W12, R32, and K107. Positions 107 and 138 each coordinate sn-glycerol 3-phosphate. A142 provides a ligand contact to NADPH. Positions 193, 246, 256, 257, and 258 each coordinate sn-glycerol 3-phosphate. The Proton acceptor role is filled by K193. Residue R257 participates in NADPH binding. 2 residues coordinate NADPH: V281 and E283.

It belongs to the NAD-dependent glycerol-3-phosphate dehydrogenase family.

Its subcellular location is the cytoplasm. It carries out the reaction sn-glycerol 3-phosphate + NAD(+) = dihydroxyacetone phosphate + NADH + H(+). It catalyses the reaction sn-glycerol 3-phosphate + NADP(+) = dihydroxyacetone phosphate + NADPH + H(+). Its pathway is membrane lipid metabolism; glycerophospholipid metabolism. Functionally, catalyzes the reduction of the glycolytic intermediate dihydroxyacetone phosphate (DHAP) to sn-glycerol 3-phosphate (G3P), the key precursor for phospholipid synthesis. The protein is Glycerol-3-phosphate dehydrogenase [NAD(P)+] of Dehalococcoides mccartyi (strain ATCC BAA-2100 / JCM 16839 / KCTC 5957 / BAV1).